Consider the following 6077-residue polypeptide: Nonribosomal peptide synthetase nlsA (6077 aa).

An adenylation 1 region spans residues 417 to 618 (VFAYAPLIHG…LGRKDSQIKL (202 aa)). The region spanning 751–827 (HSEVTVEDRL…DLVTRVQEIK (77 aa)) is the Carrier 1 domain. The residue at position 788 (S788) is an O-(pantetheine 4'-phosphoryl)serine. 2 condensation regions span residues 842–1267 (LSPI…GKRL) and 1309–1737 (EDIY…KQRI). Adenylation regions lie at residues 1757–2149 (QEKM…YLGE) and 2755–3157 (DRVI…QVKL). A Carrier 2 domain is found at 3297 to 3373 (AVERAAESTL…DMAKCCDDTE (77 aa)). Position 3334 is an O-(pantetheine 4'-phosphoryl)serine (S3334). The interval 3524–3779 (DSRYRQCLYK…LLSVPRDSLM (256 aa)) is condensation 3. Residues 3816–4213 (ENAIMHPQAT…LGRKDHQVKL (398 aa)) form an adenylation 4 region. A Carrier 3 domain is found at 4361–4437 (REGDATPAII…ELAVSCGTKP (77 aa)). S4398 bears the O-(pantetheine 4'-phosphoryl)serine mark. 2 condensation regions span residues 4451–4869 (PLSP…RVLE) and 4916–5260 (VEDI…EDKT). The Carrier 4 domain occupies 5334–5410 (RAPNDSEKQL…NMMALINDRK (77 aa)). S5371 is modified (O-(pantetheine 4'-phosphoryl)serine). Residues 5476 to 5885 (DVLPVTDFQA…SLVANPNVAL (410 aa)) are condensation 6. One can recognise a Carrier 5 domain in the interval 5921 to 6004 (SEILVHSDLI…GHMAVLALNM (84 aa)). Positions 6013-6027 (DSDAAPAPAYAPVDA) are enriched in low complexity. Positions 6013 to 6047 (DSDAAPAPAYAPVDARASRNVSTSRQQQEGLPLPA) are disordered. Residues 6031-6041 (RNVSTSRQQQE) are compositionally biased toward polar residues.

It belongs to the NRP synthetase family.

The protein operates within secondary metabolite biosynthesis. In terms of biological role, nonribosomal peptide synthetase involved in the synthesis of nidulanin A and derived compounds. Nidulanin A is a tetracyclopeptide with the sequence L-Phe-L-Kyn-L-Val-D-Val and an isoprene unit N-linked to the amino group of L-kynurenine. The NRPS nlsA is responsible of the synthesis of the cyclopeptide and the prenyltransferase nptA adds the isoprene unit on the L-kynurenine residue of nidulanin A. Further modifications lead to additional oxygenated related compounds. The protein is Nonribosomal peptide synthetase nlsA of Emericella nidulans (strain FGSC A4 / ATCC 38163 / CBS 112.46 / NRRL 194 / M139) (Aspergillus nidulans).